The chain runs to 119 residues: Methylglyoxal synthase (119 aa).

Positions 1–119 constitute an MGS-like domain; that stretch reads MKIALIAHDK…KTAELIIKQF (119 aa). Residues H8, K12, 34 to 37, and 54 to 55 contribute to the substrate site; these read TGTT and SG. The active-site Proton donor/acceptor is the D60. A substrate-binding site is contributed by H87.

Belongs to the methylglyoxal synthase family.

It carries out the reaction dihydroxyacetone phosphate = methylglyoxal + phosphate. In terms of biological role, catalyzes the formation of methylglyoxal from dihydroxyacetone phosphate. The chain is Methylglyoxal synthase from Clostridium beijerinckii (strain ATCC 51743 / NCIMB 8052) (Clostridium acetobutylicum).